We begin with the raw amino-acid sequence, 449 residues long: Exodeoxyribonuclease 7 large subunit (449 aa).

It belongs to the XseA family. As to quaternary structure, heterooligomer composed of large and small subunits.

It localises to the cytoplasm. The enzyme catalyses Exonucleolytic cleavage in either 5'- to 3'- or 3'- to 5'-direction to yield nucleoside 5'-phosphates.. Functionally, bidirectionally degrades single-stranded DNA into large acid-insoluble oligonucleotides, which are then degraded further into small acid-soluble oligonucleotides. This chain is Exodeoxyribonuclease 7 large subunit, found in Salmonella newport (strain SL254).